The sequence spans 1191 residues: DNA topoisomerase 2 (1191 aa).

Residues Asn-64, Asn-95, and 142–149 contribute to the ATP site; that span reads GTNGVGLK. Residues Glu-437, Asp-538, and Asp-540 each coordinate Mg(2+). In terms of domain architecture, Topo IIA-type catalytic spans 706-1173; sequence IPNFLDGMTR…PGASVWLEEI (468 aa). Tyr-799 functions as the O-(5'-phospho-DNA)-tyrosine intermediate in the catalytic mechanism.

It belongs to the type II topoisomerase family. It depends on Mg(2+) as a cofactor. Requires Mn(2+) as cofactor. Ca(2+) serves as cofactor.

It is found in the host cytoplasm. The enzyme catalyses ATP-dependent breakage, passage and rejoining of double-stranded DNA.. In terms of biological role, type II topoisomerase. Processively relaxes supercoiled DNA. Displays DNA-supercoiling activity only when associated with the viral histone-like protein. The chain is DNA topoisomerase 2 from Ornithodoros (relapsing fever ticks).